The sequence spans 238 residues: MLTEGLSIDAKGGGRFGAHLQLPARGRGPVVMVAQEIFGVNPFMTEVLAWLASEGFVGLCPDLYWRHGPGIEFDPNDEVQRARALGMFRDYKLEDGVADLRATVAYAASQPFCDGGVAVIGYCLGGALAYEVAAEGFAQCCVGYYGVGFEKRLERARLVKTPSMFHMGTNDHFVTAEARQLITNAFEANPAIALHWYDAGHSFARASSPNFSPEATRTANARTLEMLKRMKPIGTIGQ.

Catalysis depends on residues Cys123, Asp171, and His201.

Belongs to the dienelactone hydrolase family. As to quaternary structure, monomer.

It carries out the reaction 2-(5-oxo-2,5-dihydrofuran-2-ylidene)acetate + H2O = 4-oxohex-2-enedioate + H(+). Its pathway is aromatic compound metabolism; 3-chlorocatechol degradation. Its function is as follows. Ring cleavage of cyclic ester dienelactone to produce maleylacetate. The polypeptide is Carboxymethylenebutenolidase (tcbE) (Pseudomonas sp. (strain P51)).